A 199-amino-acid polypeptide reads, in one-letter code: GTP cyclohydrolase-2 (199 aa).

Residue 49-53 coordinates GTP; that stretch reads RIHSE. 3 residues coordinate Zn(2+): Cys54, Cys65, and Cys67. GTP-binding positions include Gln70, 92–94, and Thr114; that span reads EGR. Catalysis depends on Asp126, which acts as the Proton acceptor. The active-site Nucleophile is the Arg128. GTP is bound by residues Thr149 and Lys154.

It belongs to the GTP cyclohydrolase II family. As to quaternary structure, homodimer. Requires Zn(2+) as cofactor.

It catalyses the reaction GTP + 4 H2O = 2,5-diamino-6-hydroxy-4-(5-phosphoribosylamino)-pyrimidine + formate + 2 phosphate + 3 H(+). The protein operates within cofactor biosynthesis; riboflavin biosynthesis; 5-amino-6-(D-ribitylamino)uracil from GTP: step 1/4. In terms of biological role, catalyzes the conversion of GTP to 2,5-diamino-6-ribosylamino-4(3H)-pyrimidinone 5'-phosphate (DARP), formate and pyrophosphate. The polypeptide is GTP cyclohydrolase-2 (Blochmanniella pennsylvanica (strain BPEN)).